The primary structure comprises 430 residues: Histidine--tRNA ligase (430 aa).

It belongs to the class-II aminoacyl-tRNA synthetase family. As to quaternary structure, homodimer.

It is found in the cytoplasm. The enzyme catalyses tRNA(His) + L-histidine + ATP = L-histidyl-tRNA(His) + AMP + diphosphate + H(+). The chain is Histidine--tRNA ligase from Anaplasma marginale (strain St. Maries).